We begin with the raw amino-acid sequence, 217 residues long: Dephospho-CoA kinase (217 aa).

The DPCK domain maps to V2–K217. Residue A10–T15 participates in ATP binding.

It belongs to the CoaE family.

It is found in the cytoplasm. It carries out the reaction 3'-dephospho-CoA + ATP = ADP + CoA + H(+). It participates in cofactor biosynthesis; coenzyme A biosynthesis; CoA from (R)-pantothenate: step 5/5. Its function is as follows. Catalyzes the phosphorylation of the 3'-hydroxyl group of dephosphocoenzyme A to form coenzyme A. The polypeptide is Dephospho-CoA kinase (Lactococcus lactis subsp. lactis (strain IL1403) (Streptococcus lactis)).